The following is a 115-amino-acid chain: Large ribosomal subunit protein uL24 (115 aa).

Residues 49-68 (NMKTKHHPPSKDQEKGSITK) are disordered.

The protein belongs to the universal ribosomal protein uL24 family. Part of the 50S ribosomal subunit.

One of two assembly initiator proteins, it binds directly to the 5'-end of the 23S rRNA, where it nucleates assembly of the 50S subunit. In terms of biological role, one of the proteins that surrounds the polypeptide exit tunnel on the outside of the subunit. The chain is Large ribosomal subunit protein uL24 from Phytoplasma australiense.